Here is a 336-residue protein sequence, read N- to C-terminus: Anthranilate phosphoribosyltransferase (336 aa).

5-phospho-alpha-D-ribose 1-diphosphate is bound by residues Gly79, 82–83, Thr87, 89–92, 107–115, and Ser119; these read GD, NIST, and KHGNRAMSS. Gly79 provides a ligand contact to anthranilate. Mg(2+) is bound at residue Ser91. Asn110 provides a ligand contact to anthranilate. Arg165 is a binding site for anthranilate. Mg(2+) contacts are provided by Asp225 and Glu226.

It belongs to the anthranilate phosphoribosyltransferase family. As to quaternary structure, homodimer. It depends on Mg(2+) as a cofactor.

The catalysed reaction is N-(5-phospho-beta-D-ribosyl)anthranilate + diphosphate = 5-phospho-alpha-D-ribose 1-diphosphate + anthranilate. The protein operates within amino-acid biosynthesis; L-tryptophan biosynthesis; L-tryptophan from chorismate: step 2/5. Its function is as follows. Catalyzes the transfer of the phosphoribosyl group of 5-phosphorylribose-1-pyrophosphate (PRPP) to anthranilate to yield N-(5'-phosphoribosyl)-anthranilate (PRA). The chain is Anthranilate phosphoribosyltransferase from Dictyoglomus turgidum (strain DSM 6724 / Z-1310).